Reading from the N-terminus, the 207-residue chain is Nuclear transcription factor Y subunit beta (207 aa).

Residues 1–52 are a domain; sequence MTMDGDSSTTDASQLGISADYIGGSHYVIQPHDDTEDSMNDHEDTNGSKESF. A disordered region spans residues 27–52; it reads YVIQPHDDTEDSMNDHEDTNGSKESF. Residues 39–52 are compositionally biased toward basic and acidic residues; that stretch reads MNDHEDTNGSKESF. The b domain stretch occupies residues 53-142; sequence REQDIYLPIA…PLKLYLQKFR (90 aa). Residues 59–65 mediate DNA binding; that stretch reads LPIANVA. The interval 86-97 is subunit association domain (SAD); the sequence is VQECVSEFISFI. Residue lysine 140 forms a Glycyl lysine isopeptide (Lys-Gly) (interchain with G-Cter in ubiquitin) linkage. Positions 143 to 207 are c domain; that stretch reads EAMKGEKGIG…ISGVQQIQFS (65 aa).

It belongs to the NFYB/HAP3 subunit family. In terms of assembly, heterotrimeric transcription factor composed of three components, NF-YA, NF-YB and NF-YC. NF-YB and NF-YC must interact and dimerize for NF-YA association and DNA binding. Interacts with C1QBP. Monoubiquitination at Lys-140 plays an important role in transcriptional activation by allowing the deposition of histone H3 methylations as well as histone H2B monoubiquitination at 'Lys-121'.

It localises to the nucleus. Functionally, component of the sequence-specific heterotrimeric transcription factor (NF-Y) which specifically recognizes a 5'-CCAAT-3' box motif found in the promoters of its target genes. NF-Y can function as both an activator and a repressor, depending on its interacting cofactors. In Equus caballus (Horse), this protein is Nuclear transcription factor Y subunit beta (NFYB).